A 712-amino-acid chain; its full sequence is MGQKVHPLGFRVGITKKHQSQWFARFQKYAYSQSVFEDHMLRTTLVNLFSNLEKESALATKQSKNRGATQPKAPKITQIKIERGLIPYEIGIQIHSNDCLSITKAIDNIKVSKDLVTNLQKTRKYLFKAGTQLKNASMQVSDNLNVAEGENSTMLKTKTSASGTSVLKKRTFKIQTQKPTKGKFVFKGKRKQKKKLSKAVFMRLKNIKRRFKKRQTIKKRYLNIISKGLLIRKKGNLIIRNVKIKRKNKTARLTSRKSQPTLRSGSNLRDNLAPVKSKMQRFNNRMSKKFANLFLTKLNKQFLVRLKAIMKFWHNQNVTKAPLGYNKKWSLAKSYALINNLKAKYLAKDILSLGSLRVQKLRKLISILEKKSLVKMETLRKDFITFGTLSKTRAFGYYQMITFLKQLKELVTKIKKQTIANVTTKQELCCYNKLALNKTKIQNLIRAKSKQTKSITQKVVNNFVKLVDDNQAMANESRKIKWISYLKDLVNKHRTENIFYYLATIATARKDLNALKRYTKQHANFLFGVNVENAKENPNALLQRVTKTLTQYSKNPLVNNDFENAEGLTKLQTAFLTQIESQRKMYKANLALTPKISIKFFSVKTTNLLEKASTVADSIVDALEKRKAFRGVIKKAKEDLMLRSRVTRVKGVKIQVAGRLNGAEIARSEWVRAGRVPLQTLRANIDYAYRTANTIYGIIGVKVWIFKGYSKI.

Residues Met-1–Asn-118 form an S3-like 1st part region. Residues Leu-119–Glu-580 form an intervening sequence (IVS) region. The tract at residues Ser-581–Ile-712 is S3-like 2nd part.

This sequence belongs to the universal ribosomal protein uS3 family. Part of the 30S ribosomal subunit.

It localises to the plastid. Its subcellular location is the chloroplast. The polypeptide is Small ribosomal subunit protein uS3c (rps3) (Chlamydomonas reinhardtii (Chlamydomonas smithii)).